The sequence spans 275 residues: NH(3)-dependent NAD(+) synthetase (275 aa).

46–53 contacts ATP; that stretch reads GISGGQDS. Aspartate 52 contributes to the Mg(2+) binding site. Residue arginine 140 participates in deamido-NAD(+) binding. Threonine 160 lines the ATP pocket. Glutamate 165 contributes to the Mg(2+) binding site. Deamido-NAD(+)-binding residues include lysine 173 and aspartate 180. Residues lysine 189 and threonine 211 each contribute to the ATP site. Residue 260 to 261 coordinates deamido-NAD(+); that stretch reads HK.

Belongs to the NAD synthetase family. As to quaternary structure, homodimer.

The catalysed reaction is deamido-NAD(+) + NH4(+) + ATP = AMP + diphosphate + NAD(+) + H(+). It participates in cofactor biosynthesis; NAD(+) biosynthesis; NAD(+) from deamido-NAD(+) (ammonia route): step 1/1. Functionally, catalyzes the ATP-dependent amidation of deamido-NAD to form NAD. Uses ammonia as a nitrogen source. The chain is NH(3)-dependent NAD(+) synthetase from Enterobacter sp. (strain 638).